A 734-amino-acid chain; its full sequence is Sulfate transporter (734 aa).

Residues 1-18 (MSLKNEDQNDLSPKDSVK) show a composition bias toward basic and acidic residues. The disordered stretch occupies residues 1 to 38 (MSLKNEDQNDLSPKDSVKGNDQYRAPSGIHLEPEEESR). Phosphoserine occurs at positions 12 and 16. A run of 2 helical transmembrane segments spans residues 113 to 133 (VMSGLIVGILLVPQSIAYSLL) and 138 to 158 (PIYGLYTSFFASLIYFILGTS). The N-linked (GlcNAc...) asparagine glycan is linked to Asn194. Transmembrane regions (helical) follow at residues 214–234 (IIVGSTVTFVAGVYQVAMGFF), 237–257 (GFVSVYLSDALLGGFVTGASF), 379–399 (VDAIAIAIIGFAITVSLSEMF), 415–435 (AIGFCNIIPSFFHCFTTSAAL), 453–473 (VMTALVLLLVLLVIAPLFFSL), and 519–539 (LISTEIGLLTGVCFSMFCVIL). The STAS domain occupies 563-714 (AYKNLQAKSG…YSIYEAMTFA (152 aa)).

Belongs to the SLC26A/SulP transporter (TC 2.A.53) family. Post-translationally, N-glycosylated.

Its subcellular location is the cell membrane. It is found in the apical cell membrane. The enzyme catalyses oxalate(in) + sulfate(out) = oxalate(out) + sulfate(in). The catalysed reaction is sulfate(out) + 2 chloride(in) = sulfate(in) + 2 chloride(out). It catalyses the reaction oxalate(out) + 2 chloride(in) = oxalate(in) + 2 chloride(out). It carries out the reaction bromide(in) + chloride(out) = bromide(out) + chloride(in). The enzyme catalyses nitrate(in) + chloride(out) = nitrate(out) + chloride(in). The catalysed reaction is iodide(in) + chloride(out) = iodide(out) + chloride(in). Its function is as follows. Sulfate transporter which mediates sulfate uptake into chondrocytes in order to maintain adequate sulfation of proteoglycans which is needed for cartilage development. Mediates electroneutral anion exchange of sulfate ions for oxalate ions, sulfate and oxalate ions for chloride and/or hydroxyl ions and chloride ions for bromide, iodide and nitrate ions. The coupling of sulfate transport to both hydroxyl and chloride ions likely serves to ensure transport at both acidic pH when most sulfate uptake is mediated by sulfate-hydroxide exchange and alkaline pH when most sulfate uptake is mediated by sulfate-chloride exchange. Essential for chondrocyte proliferation, differentiation and cell size expansion. This is Sulfate transporter (SLC26A2) from Bos taurus (Bovine).